Here is an 895-residue protein sequence, read N- to C-terminus: GPMGPSGPRGIPGPPGAPGPQGFQGPPGEPGEPGASGPMGPRGPPGPPGKNGDDGEAGKPGRPGERGPPGPQGARGIPGTAGIPGMKGFSGIDGAKGDAGPAGPKGEPGSPGENGAPGQMGPRGIPGERGRPGAPGPAGARGNDGATGAAGPPGPTGPAGPPGFPGAVGAKGEAGPQGARGSEGPQGVRGEPGPPGPAGAAGPAGNPGADGQPGAKGANGAPGIAGAPGFPGARGPSGPQGPSGPPGPKGNSGEPGAPGNKGDTGAKGEPGPTGIQGPPGPAGEEGKRGEPGPIGIPGPPGERGFPGADGVAGPKGPAGERGAPGPAGPKGSPGEAGRPGEAGIPGAKGITGSPGSPGPDGKTGPPGPAGQDGRPGPPGPPGARGQAGVMGFPGPKGAAGEPGKGVPGPPGAVGPAGKDGEAGAQGPPGPAGPAGERGEQGPAGSPGFQGIPGPAGPPGESGKPGEQGVPGDIGAPGPSGARGFPGERGVQGPPGPAGPRSQGAPGIQGMPGERGAAGIPGPKGDRGDAGPKGITGPIGPPGPAGAPGDKGETGPSGPAGPTGARRGEPGPPGPAGFAGPPGADGQPGAKGDAGPPGPAGPAGPPGPIGSVGAPGPKGSAGPPGATGFPGAAGRVGPPGPSGNAGPPGPPGPVGKGPRGETGPAGRPGEAGPPGPPGPAGEKGSPGADGPAGAPGTPGPQGIAGQRGVVGIPGQRGFPGIPGPSGEPGKQGPSGASGERGPPGPVGPPGIAGPPGESGREGSPGAEGSAGRDGSPGPKGDRGETGPAGPPGAPGAPGAPGPVGPAGKSGDRGEAGPAGPAGPIGPVGARGPAGPQGPRGFSGIQGPPGPPGSPGEQGPSGASGPAGPRGPPGSAGAPGKDGINGIPGPIGPPGPR.

Residues 1-895 form a disordered region; sequence GPMGPSGPRG…PGPIGPPGPR (895 aa). Residues 20 to 39 show a composition bias toward low complexity; that stretch reads PQGFQGPPGEPGEPGASGPM. Residues 51–65 show a composition bias toward basic and acidic residues; it reads NGDDGEAGKPGRPGE. S90 bears the Phosphoserine mark. 2 stretches are compositionally biased toward low complexity: residues 98-114 and 137-150; these read DAGP…PGEN and PAGA…TGAA. Residues 152–164 are compositionally biased toward pro residues; the sequence is PPGPTGPAGPPGF. 6 stretches are compositionally biased toward low complexity: residues 198-237, 302-336, 348-374, 383-399, 553-564, and 575-593; these read AGAA…RGPS, ERGF…PGEA, KGIT…QDGR, ARGQ…KGAA, TGPSGPAGPTGA, and AGFA…KGDA. Residue S556 is modified to Phosphoserine. A compositionally biased stretch (pro residues) spans 595–607; the sequence is PPGPAGPAGPPGP. Composition is skewed to low complexity over residues 608–635, 660–669, and 679–703; these read IGSV…AGRV, ETGPAGRPGE, and AGEK…QGIA. The span at 741 to 751 shows a compositional bias: pro residues; it reads PPGPVGPPGIA. Positions 753 to 768 are enriched in low complexity; the sequence is PPGESGREGSPGAEGS. The segment covering 787–802 has biased composition (pro residues); it reads AGPPGAPGAPGAPGPV. Low complexity-rich tracts occupy residues 823–838 and 853–886; these read IGPV…QGPR and PGEQ…NGIP.

Belongs to the fibrillar collagen family. In terms of assembly, trimers of one alpha 2(I) and two alpha 1(I) chains. Prolines at the third position of the tripeptide repeating unit (G-X-Y) are hydroxylated in some or all of the chains. In terms of tissue distribution, forms the fibrils of tendon, ligaments and bones. In bones, the fibrils are mineralized with calcium hydroxyapatite.

It localises to the secreted. Its subcellular location is the extracellular space. The protein localises to the extracellular matrix. Functionally, type I collagen is a member of group I collagen (fibrillar forming collagen). The chain is Collagen alpha-1(I) chain from Equus sp.